A 97-amino-acid chain; its full sequence is UPF0235 protein PFL_5841 (97 aa).

It belongs to the UPF0235 family.

The protein is UPF0235 protein PFL_5841 of Pseudomonas fluorescens (strain ATCC BAA-477 / NRRL B-23932 / Pf-5).